Consider the following 505-residue polypeptide: Protein disulfide-isomerase A3 (505 aa).

A signal peptide spans 1-24 (MRLRRLALFPGVALLLAAARLAAA). The region spanning 25–133 (SDVLELTDDN…IVSHLKKQAG (109 aa)) is the Thioredoxin 1 domain. Residues cysteine 57 and cysteine 60 each act as nucleophile in the active site. Cysteines 57 and 60 form a disulfide. Residue lysine 61 is modified to N6-methyllysine. A disulfide bridge connects residues cysteine 85 and cysteine 92. Lysine 129 is subject to N6-succinyllysine. Lysine 152 carries the N6-acetyllysine modification. An N6-succinyllysine modification is found at lysine 218. Residue lysine 252 is modified to N6-acetyllysine. Residue threonine 319 is modified to Phosphothreonine. Residues 343 to 485 (SRDGKALERF…FISYLQREAT (143 aa)) form the Thioredoxin 2 domain. Lysine 362 is modified (N6-acetyllysine). Catalysis depends on nucleophile residues cysteine 406 and cysteine 409. Residues cysteine 406 and cysteine 409 are joined by a disulfide bond. A disordered region spans residues 484 to 505 (ATNPPVIQEEKPKKKKKAQEDL). Residues 491-505 (QEEKPKKKKKAQEDL) show a composition bias toward basic and acidic residues. Lysine 494 bears the N6-acetyllysine mark. The Prevents secretion from ER motif lies at 502 to 505 (QEDL).

Belongs to the protein disulfide isomerase family. As to quaternary structure, part of the major histocompatibility complex class I (MHC I) peptide loading complex composed of TAP1, TAP2, B2M, MHC heavy chain, TAPBP, PDIA3, and CALR. Interacts with ERP27 and CANX. Interacts with SERPINA2 and with SERPINA1. Interacts with ATP2A2. In terms of processing, within the major histocompatibility complex class I (MHC I) peptide loading complex forms reversible disulfide-linked heterodimers with TAPBP as part of its protein folding chaperone activity. This is essential to assist the dynamic assembly of the MHC I complex with high affinity antigens in the endoplasmic reticulum. Phosphorylated.

The protein localises to the endoplasmic reticulum. The protein resides in the endoplasmic reticulum lumen. It is found in the melanosome. It catalyses the reaction Catalyzes the rearrangement of -S-S- bonds in proteins.. Protein disulfide isomerase that catalyzes the formation, isomerization, and reduction or oxidation of disulfide bonds in client proteins and functions as a protein folding chaperone. Core component of the major histocompatibility complex class I (MHC I) peptide loading complex where it functions as an essential folding chaperone for TAPBP. Through TAPBP, assists the dynamic assembly of the MHC I complex with high affinity antigens in the endoplasmic reticulum. Therefore, plays a crucial role in the presentation of antigens to cytotoxic T cells in adaptive immunity. In Chlorocebus aethiops (Green monkey), this protein is Protein disulfide-isomerase A3 (PDIA3).